A 361-amino-acid polypeptide reads, in one-letter code: MRRYLKKAKPKIVQTSDNEEEKHEENLNVSQSNKNANRRKTKAKEKNSGKFRVKYENEEGDDDGEDSQIPLIPKVKKQSSFHSVDDLISRRMDALSHESGYSNAYVDELKRKSRQTPSEFTKKEEDSSTKESELQTRSSPPLPVNTSLEWNMLNQGIPEEAMIKELKDREGRKRNIAMMTDNYISLETGDQLMLAQNHKEEKLLQTEDEIQDEGYSGFENYVEESEKLQEIYHHSSESLRTRSIQMAVDQKNMEMELDDEDIAEPIQSWEHTQIKKGAFGESPAFTNGLSVKLPNILTMDEQIQRLKEAIASEKLQQEERSQIIKSLMEEELEINEQEEKIKHSFIDLDKTLLNNLTKSKS.

Residues 1–10 show a composition bias toward basic residues; it reads MRRYLKKAKP. 2 disordered regions span residues 1–82 and 94–147; these read MRRY…SSFH and ALSH…VNTS. 2 stretches are compositionally biased toward basic and acidic residues: residues 44-57 and 120-134; these read KEKN…KYEN and FTKK…ESEL. The span at 135–147 shows a compositional bias: polar residues; it reads QTRSSPPLPVNTS. Residues 295–349 adopt a coiled-coil conformation; sequence NILTMDEQIQRLKEAIASEKLQQEERSQIIKSLMEEELEINEQEEKIKHSFIDLD.

It is found in the cytoplasm. The protein localises to the nucleus. This is an uncharacterized protein from Schizosaccharomyces pombe (strain 972 / ATCC 24843) (Fission yeast).